Here is a 340-residue protein sequence, read N- to C-terminus: MKERINQLLQEIGQCVAATVEEAEALRIKYLSKKGEIARLFDDFRLVPSEEKKQIGQMLNELKNKAQEHINSLRERAQAGSAQASAETDLTRTSYPTRLGTRHPISLVKQEICEIFARLGFSIADGPEIEDDWHVFSSMNFAEDHPARDMQDTFFIEHRPDVILRTHTSSVQSRVMEKTQPPIRVICPGRTYRNEAISYRAHCFFHQVEALYVDKDVSFADLRQVLLYFAQEMFGAETKIRLRPSYFPFTEPSAEMDISCNICGGKGCNFCKHTGWVEILGCGMVDPNVLDNCGIDSKKYSGYALGMGIERITNLKYRVKDLRFFSENDLNFLEQFKSVH.

Glutamate 251 serves as a coordination point for Mg(2+).

Belongs to the class-II aminoacyl-tRNA synthetase family. Phe-tRNA synthetase alpha subunit type 1 subfamily. Tetramer of two alpha and two beta subunits. Requires Mg(2+) as cofactor.

It localises to the cytoplasm. It catalyses the reaction tRNA(Phe) + L-phenylalanine + ATP = L-phenylalanyl-tRNA(Phe) + AMP + diphosphate + H(+). The chain is Phenylalanine--tRNA ligase alpha subunit from Porphyromonas gingivalis (strain ATCC 33277 / DSM 20709 / CIP 103683 / JCM 12257 / NCTC 11834 / 2561).